Reading from the N-terminus, the 245-residue chain is tRNA1(Val) (adenine(37)-N6)-methyltransferase (245 aa).

The protein belongs to the methyltransferase superfamily. tRNA (adenine-N(6)-)-methyltransferase family.

It localises to the cytoplasm. The enzyme catalyses adenosine(37) in tRNA1(Val) + S-adenosyl-L-methionine = N(6)-methyladenosine(37) in tRNA1(Val) + S-adenosyl-L-homocysteine + H(+). Its function is as follows. Specifically methylates the adenine in position 37 of tRNA(1)(Val) (anticodon cmo5UAC). This Escherichia coli O139:H28 (strain E24377A / ETEC) protein is tRNA1(Val) (adenine(37)-N6)-methyltransferase.